The chain runs to 642 residues: Threonine--tRNA ligase (642 aa).

Positions 1–58 constitute a TGS domain; it reads MQVAGKELEVQQGALCGEVLKEALSKKQFKNVVVAKCGDTLLDLTTTVPADCTDLEPV. A catalytic region spans residues 239–530; it reads DHRKLGTQLD…LLEHTGGALP (292 aa). Zn(2+) is bound by residues Cys-331, His-382, and His-507.

Belongs to the class-II aminoacyl-tRNA synthetase family. As to quaternary structure, homodimer. Zn(2+) serves as cofactor.

It localises to the cytoplasm. It carries out the reaction tRNA(Thr) + L-threonine + ATP = L-threonyl-tRNA(Thr) + AMP + diphosphate + H(+). Its function is as follows. Catalyzes the attachment of threonine to tRNA(Thr) in a two-step reaction: L-threonine is first activated by ATP to form Thr-AMP and then transferred to the acceptor end of tRNA(Thr). Also edits incorrectly charged L-seryl-tRNA(Thr). This chain is Threonine--tRNA ligase, found in Maridesulfovibrio salexigens (strain ATCC 14822 / DSM 2638 / NCIMB 8403 / VKM B-1763) (Desulfovibrio salexigens).